The sequence spans 145 residues: Leptin (145 aa).

Residues cysteine 95 and cysteine 145 are joined by a disulfide bond.

This sequence belongs to the leptin family.

It localises to the secreted. Functionally, key player in the regulation of energy balance and body weight control. Once released into the circulation, has central and peripheral effects by binding LEPR, found in many tissues, which results in the activation of several major signaling pathways. The protein is Leptin (LEP) of Meleagris gallopavo (Wild turkey).